A 101-amino-acid polypeptide reads, in one-letter code: Urease subunit beta (101 aa).

Belongs to the urease beta subunit family. Heterotrimer of UreA (gamma), UreB (beta) and UreC (alpha) subunits. Three heterotrimers associate to form the active enzyme.

It is found in the cytoplasm. The catalysed reaction is urea + 2 H2O + H(+) = hydrogencarbonate + 2 NH4(+). It functions in the pathway nitrogen metabolism; urea degradation; CO(2) and NH(3) from urea (urease route): step 1/1. The protein is Urease subunit beta of Ralstonia nicotianae (strain ATCC BAA-1114 / GMI1000) (Ralstonia solanacearum).